A 99-amino-acid polypeptide reads, in one-letter code: Regulatory protein FanB (99 aa).

Its function is as follows. Trans-acting protein involved in the regulation of the biogenesis of K99 fimbriae (FanC). This Escherichia coli protein is Regulatory protein FanB (fanB).